Here is a 150-residue protein sequence, read N- to C-terminus: Transcriptional regulator MraZ (150 aa).

2 SpoVT-AbrB domains span residues 5–52 (VTHL…PLPD) and 81–124 (AHDL…DAEA).

It belongs to the MraZ family. As to quaternary structure, forms oligomers.

It is found in the cytoplasm. The protein localises to the nucleoid. This chain is Transcriptional regulator MraZ, found in Alkalilimnicola ehrlichii (strain ATCC BAA-1101 / DSM 17681 / MLHE-1).